The sequence spans 704 residues: Elongation factor G (704 aa).

The tr-type G domain occupies 8–290; sequence ARYRNIGISA…AVIEYLPAPT (283 aa). Residues 17–24, 88–92, and 142–145 each bind GTP; these read AHIDAGKT, DTPGH, and NKMD.

Belongs to the TRAFAC class translation factor GTPase superfamily. Classic translation factor GTPase family. EF-G/EF-2 subfamily.

It localises to the cytoplasm. Its function is as follows. Catalyzes the GTP-dependent ribosomal translocation step during translation elongation. During this step, the ribosome changes from the pre-translocational (PRE) to the post-translocational (POST) state as the newly formed A-site-bound peptidyl-tRNA and P-site-bound deacylated tRNA move to the P and E sites, respectively. Catalyzes the coordinated movement of the two tRNA molecules, the mRNA and conformational changes in the ribosome. This chain is Elongation factor G, found in Proteus mirabilis (strain HI4320).